The primary structure comprises 319 residues: Probable cytochrome c oxidase subunit 2 (319 aa).

An N-terminal signal peptide occupies residues 1–33 (MSPNGSDRSPRRPMRRKLLQALTAGLVLATATG). 2 helical membrane passes run 63–83 (WAAA…SVFF) and 101–121 (LPIE…LFYF). Residues H227, C262, C266, and H270 each contribute to the Cu cation site.

The protein belongs to the cytochrome c oxidase subunit 2 family. Requires Cu cation as cofactor. Heme is required as a cofactor.

The protein localises to the cell membrane. The catalysed reaction is 4 Fe(II)-[cytochrome c] + O2 + 8 H(+)(in) = 4 Fe(III)-[cytochrome c] + 2 H2O + 4 H(+)(out). Its function is as follows. Subunits I and II form the functional core of the enzyme complex. Electrons originating in cytochrome c are transferred via heme a and Cu(A) to the binuclear center formed by heme a3 and Cu(B). This chain is Probable cytochrome c oxidase subunit 2 (ctaC), found in Streptomyces coelicolor (strain ATCC BAA-471 / A3(2) / M145).